The sequence spans 296 residues: Decaprenyl diphosphate synthase (296 aa).

Residues 1 to 58 (MVRNERTLKSTDFPQLPPAPDDYPTFPDKSTWPVVFPMLPPSPDGGPRRPPQHTSKAV) are disordered. Asp-76 is a catalytic residue. Asp-76 is a binding site for Mg(2+). Residues 77–80 (GNGR), Trp-81, Arg-89, His-93, and 121–123 (STE) each bind substrate. Asn-124 functions as the Proton acceptor in the catalytic mechanism. Substrate is bound by residues Trp-125, Arg-127, Arg-244, and 250-252 (RSS). Glu-263 serves as a coordination point for Mg(2+).

Belongs to the UPP synthase family. As to quaternary structure, homodimer. Mg(2+) is required as a cofactor.

The protein resides in the cell membrane. It catalyses the reaction (2Z,6E)-farnesyl diphosphate + 7 isopentenyl diphosphate = (2Z,6Z,10Z,14Z,18Z,22Z,26Z,30Z,34E)-decaprenyl diphosphate + 7 diphosphate. It carries out the reaction n isopentenyl diphosphate + (2E,6E)-farnesyl diphosphate = a di-trans,poly-cis-polyprenyl diphosphate + n diphosphate. Functionally, catalyzes the sequential condensation of isopentenyl diphosphate (IPP) in the cis configuration with (2Z,6E)-farnesyl diphosphate (Z-FPP or EZ-FPP) generating the 50 carbon product trans,polycis-decaprenyl diphosphate. When (2E,6E)-farnesyl diphosphate (E-FPP or EE-FPP) is used in vitro, both primary products decaprenyl diphosphate and (2E,6E,10E)-geranylgeranyl diphosphate (EEE-GGPP) are synthesized. M.tuberculosis does not synthesize (2E,6E,10Z)-geranylgeranyl diphosphate (EEZ-GGPP) and heptaprenyl diphosphate. Can also accept many different allylic substrates, including E-geranyl diphosphate (E-GPP), neryl diphosphate (NPP), and all-trans-geranyl-geranyl diphosphate. In Mycobacterium leprae (strain TN), this protein is Decaprenyl diphosphate synthase (uppS).